Here is a 133-residue protein sequence, read N- to C-terminus: Small ribosomal subunit protein uS8 (133 aa).

It belongs to the universal ribosomal protein uS8 family. Part of the 30S ribosomal subunit. Contacts proteins S5 and S12.

In terms of biological role, one of the primary rRNA binding proteins, it binds directly to 16S rRNA central domain where it helps coordinate assembly of the platform of the 30S subunit. This is Small ribosomal subunit protein uS8 from Rhodopirellula baltica (strain DSM 10527 / NCIMB 13988 / SH1).